The primary structure comprises 61 residues: UPF0312 protein (61 aa).

This sequence belongs to the UPF0312 family.

The polypeptide is UPF0312 protein (Delftia acidovorans (Pseudomonas acidovorans)).